The chain runs to 532 residues: Nectin-4 (532 aa).

Positions 1–30 (MGPLHGALLPPISVTVSLLILLLCAPGGRC) are cleaved as a signal peptide. The Ig-like V-type domain maps to 31 to 142 (GVVHTEKSMT…GNFDAELELK (112 aa)). Topologically, residues 31–344 (GVVHTEKSMT…TKIDLVSVSL (314 aa)) are extracellular. 3 disulfide bridges follow: Cys51-Cys125, Cys169-Cys221, and Cys266-Cys312. 2 Ig-like C2-type domains span residues 146–235 (PPLP…KRIT) and 244–328 (AEVS…AIVS). The segment at 152-179 (GPGPPLTEGEGKSLAASCTAEGNPAPTL) is disordered. Residues Asn189 and Asn282 are each glycosylated (N-linked (GlcNAc...) asparagine). The chain crosses the membrane as a helical span at residues 345–365 (GSVGILTAVLLVVLVITLLLV). Residues 366 to 532 (NRHHKRQTKQ…IYINGRGHLV (167 aa)) lie on the Cytoplasmic side of the membrane. Positions 453-491 (QTELLSTVPDEEVKEDGEEPEQVEQSLEKEPNPTEPDGM) are disordered. Residues 461–474 (PDEEVKEDGEEPEQ) are compositionally biased toward acidic residues.

Belongs to the nectin family.

It is found in the cell membrane. Its function is as follows. May be involved in cell adhesion. This chain is Nectin-4, found in Xenopus tropicalis (Western clawed frog).